Consider the following 445-residue polypeptide: tRNA modification GTPase MnmE (445 aa).

(6S)-5-formyl-5,6,7,8-tetrahydrofolate contacts are provided by R20, E79, and K119. Positions 215–371 (GLKLAIIGPP…ILKNIEEIAE (157 aa)) constitute a TrmE-type G domain. N225 is a K(+) binding site. Residues 225-230 (NAGKSS), 244-250 (SNIAGTT), and 269-272 (DTAG) each bind GTP. Position 229 (S229) interacts with Mg(2+). 3 residues coordinate K(+): S244, I246, and T249. Residue T250 coordinates Mg(2+). K445 provides a ligand contact to (6S)-5-formyl-5,6,7,8-tetrahydrofolate.

It belongs to the TRAFAC class TrmE-Era-EngA-EngB-Septin-like GTPase superfamily. TrmE GTPase family. In terms of assembly, homodimer. Heterotetramer of two MnmE and two MnmG subunits. K(+) is required as a cofactor.

The protein localises to the cytoplasm. In terms of biological role, exhibits a very high intrinsic GTPase hydrolysis rate. Involved in the addition of a carboxymethylaminomethyl (cmnm) group at the wobble position (U34) of certain tRNAs, forming tRNA-cmnm(5)s(2)U34. This Rickettsia bellii (strain RML369-C) protein is tRNA modification GTPase MnmE.